The sequence spans 430 residues: MTAKWEKQSGSLGVLTYEAPAEAFDKAVDQAFKKVVKTLNTPGFRKGKMPRAMFNKMYGEEALYQDALDILYQDTIEGAVVESGIEPIALDNIDVETLEKGKPVEFKITFVIEPDATLGEYKGLEYTAVETDVTDEDVDAELKTMQERGAELVVKEDGAIENGDTVVFDFAGFDGENQFDGGTAENYSLVIGSGNFIPGFEEQMVGLKSGEQKDIDVTFPEEYHEASLAGKPVVFKVTIHEIKAQELPELTDEFAKEMDEEVSSLDELKTKIRTRLENTRKQEADASMRDELVEAATKNATVDLPEVMVENEVERMVQEFTQRIQSQGIDLNMYFQLTGTTEEAMRTEMKEQAEERVKARLVLKQIVADEKIEVTEEEAQAELQSMSELYNIPADQLETMLAPQGGLDTLKGDLQFRKAIDVLVDNAKAK.

One can recognise a PPIase FKBP-type domain in the interval 163–248 (GDTVVFDFAG…IHEIKAQELP (86 aa)).

This sequence belongs to the FKBP-type PPIase family. Tig subfamily.

Its subcellular location is the cytoplasm. It catalyses the reaction [protein]-peptidylproline (omega=180) = [protein]-peptidylproline (omega=0). Involved in protein export. Acts as a chaperone by maintaining the newly synthesized protein in an open conformation. Functions as a peptidyl-prolyl cis-trans isomerase. The polypeptide is Trigger factor (Exiguobacterium sibiricum (strain DSM 17290 / CCUG 55495 / CIP 109462 / JCM 13490 / 255-15)).